A 101-amino-acid polypeptide reads, in one-letter code: MAKESMKNREAKRTKLVQRFAAKRSALKAIIQDPNAEPEAKWDAQLQLQKLPRDSSPVRQRNRCRLTGRPHGYYRKFGLSRIKLREAAMRGDVPGLVKASW.

It belongs to the universal ribosomal protein uS14 family. As to quaternary structure, part of the 30S ribosomal subunit. Contacts proteins S3 and S10.

Its function is as follows. Binds 16S rRNA, required for the assembly of 30S particles and may also be responsible for determining the conformation of the 16S rRNA at the A site. This is Small ribosomal subunit protein uS14 from Alcanivorax borkumensis (strain ATCC 700651 / DSM 11573 / NCIMB 13689 / SK2).